A 320-amino-acid polypeptide reads, in one-letter code: MKIIFAGTPEFAATALAALLKTSHEIIAVYTQPDRKAGRGQKLTPSPVKQLALEHNIPVYQPLHFKASTEEGLAAQQELAALGADVMVVAAYGLILPQAVLDTPKYGCLNIHGSLLPRWRGAAPIQRAIATGDDETGITIMQMAAGLDTGDMMYKTYCPITSEDTSATLHDKLAAQGATAICAVLESEETLQKYLAEREVQDESLTVYAHKLVKSEARIDWSMNAVQVDRNIRAFNPWPVAFIQLDENNALRVWNSTISNQNKADAQAGEIIAIDKQGVHVACGENTFICLTSVQWPGGKALNAQQIAQTQKLHVGQILP.

Ser-114–Pro-117 lines the (6S)-5,6,7,8-tetrahydrofolate pocket.

It belongs to the Fmt family.

The enzyme catalyses L-methionyl-tRNA(fMet) + (6R)-10-formyltetrahydrofolate = N-formyl-L-methionyl-tRNA(fMet) + (6S)-5,6,7,8-tetrahydrofolate + H(+). Attaches a formyl group to the free amino group of methionyl-tRNA(fMet). The formyl group appears to play a dual role in the initiator identity of N-formylmethionyl-tRNA by promoting its recognition by IF2 and preventing the misappropriation of this tRNA by the elongation apparatus. This Acinetobacter baumannii (strain ACICU) protein is Methionyl-tRNA formyltransferase.